A 127-amino-acid chain; its full sequence is Fluoride-specific ion channel FluC (127 aa).

4 consecutive transmembrane segments (helical) span residues 6 to 26, 37 to 57, 67 to 87, and 96 to 116; these read LAISLGASAGAVSRWLLGLGF, TLLANLLGGYLIGIAVTFFAA, LLVITGFLGGLTTFSTFSAEV, and LLWAGGAIAVHVIGSLVMTLL. 2 residues coordinate Na(+): Gly75 and Thr78.

It belongs to the fluoride channel Fluc/FEX (TC 1.A.43) family.

Its subcellular location is the cell inner membrane. The catalysed reaction is fluoride(in) = fluoride(out). With respect to regulation, na(+) is not transported, but it plays an essential structural role and its presence is essential for fluoride channel function. Fluoride-specific ion channel. Important for reducing fluoride concentration in the cell, thus reducing its toxicity. The protein is Fluoride-specific ion channel FluC of Tolumonas auensis (strain DSM 9187 / NBRC 110442 / TA 4).